We begin with the raw amino-acid sequence, 142 residues long: Acidic phospholipase A2 KBf-grIB (142 aa).

Intrachain disulfides connect C28/C94, C44/C141, C46/C62, C61/C122, C68/C115, C78/C108, and C101/C113. Residues Y45, G47, and G49 each coordinate Ca(2+). The active site involves H65. Residue D66 coordinates Ca(2+). The active site involves D116.

The protein belongs to the phospholipase A2 family. Group I subfamily. D49 sub-subfamily. Requires Ca(2+) as cofactor. In terms of tissue distribution, expressed by the venom gland.

It localises to the secreted. It catalyses the reaction a 1,2-diacyl-sn-glycero-3-phosphocholine + H2O = a 1-acyl-sn-glycero-3-phosphocholine + a fatty acid + H(+). Its function is as follows. PLA2 catalyzes the calcium-dependent hydrolysis of the 2-acyl groups in 3-sn-phosphoglycerides. The protein is Acidic phospholipase A2 KBf-grIB of Bungarus fasciatus (Banded krait).